A 122-amino-acid polypeptide reads, in one-letter code: Heat-labile enterotoxin IIB, B chain (122 aa).

The N-terminal stretch at 1 to 23 (MSFKKIIKAFVIMAALVSVQAHA) is a signal peptide. The cysteines at positions 33 and 104 are disulfide-linked.

Heterohexamer of one A chain and of five B chains.

Functionally, the biological activity of the toxin is produced by the A chain, which activates intracellular adenyl cyclase. This chain is Heat-labile enterotoxin IIB, B chain, found in Escherichia coli.